An 89-amino-acid polypeptide reads, in one-letter code: UPF0223 protein BCB4264_A4064 (89 aa).

This sequence belongs to the UPF0223 family.

The protein is UPF0223 protein BCB4264_A4064 of Bacillus cereus (strain B4264).